A 414-amino-acid polypeptide reads, in one-letter code: Ena/VASP-like protein (414 aa).

The region spanning 1–112 (MSEQSICQAR…NAMLFALNIM (112 aa)) is the WH1 domain. Serine 130 is modified (phosphoserine). The interval 157-369 (ATGPILPPGH…SRVKPAGSVN (213 aa)) is disordered. Over residues 179 to 204 (GPPPPPPPPVPPPPTGSTPPPPPPLP) the composition is skewed to pro residues. Residues 217–228 (SASGLAAALAGA) are compositionally biased toward low complexity. The EVH2 block A stretch occupies residues 220–240 (GLAAALAGAKLRRVQRPEDAS). Residues 220–411 (GLAAALAGAK…DAIRQELSGI (192 aa)) are EVH2. The KLKR signature appears at 229–232 (KLRR). Low complexity predominate over residues 240 to 251 (SGGSSPSGTSKS). Phosphoserine occurs at positions 244 and 257. The segment at 263–280 (GGLMEEMNKLLAKRRKAA) is EVH2 block B. Positions 297 to 318 (EDPSTSPSPGTRATSQPPNSSE) are enriched in polar residues. Phosphoserine occurs at positions 302, 304, 327, 329, 339, 347, 352, and 367. A compositionally biased stretch (basic and acidic residues) spans 319–329 (AGRKPWERSNS). The required for interaction with ZDHHC17 stretch occupies residues 340–360 (RTPSVAKSPEAKSPLQSQPHS). An EVH2 block C region spans residues 377–411 (DLDRMKQEILEEVVRELHKVKEEIIDAIRQELSGI).

It belongs to the Ena/VASP family. In terms of assembly, homotetramer. Binds to the SH3 domains of ABL1, LYN and SRC. Also binds to profilin, with preference for isoform IIa of PFN2, and the WW domain of APBB1/FE65. Binds to SEMA6A. Interacts, via the Pro-rich region, with the C-terminal SH3 domain of DNMBP. Interacts with RAPH1. Binds, via the EVH1 domain, the Pro-rich domain of Listeria monocytogenes actA. Binds, via the EVH1 domain, the Pro-rich domain of ZYX. Interacts with FYB1. Interacts with ZDHHC17. Post-translationally, phosphorylated by PKA; phosphorylation abolishes binding to SH3 domains of ABL and SRC. In terms of tissue distribution, highest expression in thymus and spleen (at protein level). Low levels in placenta, ovary, testis, fat and lung (at protein level). Isoform 1 and isoform 2 are expressed in cortical neurons and glial cells.

It localises to the cytoplasm. Its subcellular location is the cytoskeleton. The protein localises to the stress fiber. The protein resides in the cell projection. It is found in the lamellipodium. Functionally, ena/VASP proteins are actin-associated proteins involved in a range of processes dependent on cytoskeleton remodeling and cell polarity such as axon guidance and lamellipodial and filopodial dynamics in migrating cells. EVL enhances actin nucleation and polymerization. This is Ena/VASP-like protein (Evl) from Mus musculus (Mouse).